The chain runs to 193 residues: MNGYLMLFIGTVLVNNFVLVKFLGLCPFMGVSKKVETALGMGMATTFVMTLASICAWLINDFILLPLNIPYLRTLAFIFIIAVVVQFTELVVRKTSPALYRLLGIFLPLITTNCAVLGVALLNVNENHNFLQSALYGFSAAVGFSLVMVLFAAIRERLAVADVPAPFKGSSIALITAGLMSLAFMGFTGLVKV.

6 helical membrane passes run 5-25 (LMLF…FLGL), 39-59 (LGMG…AWLI), 62-82 (FILL…FIIA), 102-122 (LLGI…VALL), 134-154 (ALYG…FAAI), and 171-191 (SIAL…TGLV).

This sequence belongs to the NqrDE/RnfAE family. The complex is composed of six subunits: RnfA, RnfB, RnfC, RnfD, RnfE and RnfG.

It localises to the cell inner membrane. In terms of biological role, part of a membrane-bound complex that couples electron transfer with translocation of ions across the membrane. The sequence is that of Ion-translocating oxidoreductase complex subunit A from Sodalis glossinidius (strain morsitans).